Consider the following 573-residue polypeptide: Glutathione hydrolase 5 proenzyme (573 aa).

Over 1-8 (MAWGHRAT) the chain is Cytoplasmic. A helical; Signal-anchor for type II membrane protein transmembrane segment spans residues 9–29 (VCLVLLGVGLGLVIVVLAAVL). The Extracellular segment spans residues 30 to 573 (SPRQASCGPG…LRKAGKASGY (544 aa)). N-linked (GlcNAc...) asparagine glycosylation is present at asparagine 98. Position 110 (arginine 110) interacts with L-glutamate. N-linked (GlcNAc...) asparagine glycosylation is found at asparagine 185, asparagine 204, asparagine 277, asparagine 303, asparagine 347, and asparagine 378. Threonine 389 acts as the Nucleophile in catalysis. L-glutamate contacts are provided by residues threonine 407, glutamate 428, and 454–455 (SS).

This sequence belongs to the gamma-glutamyltransferase family. Heterodimer composed of the light and heavy chains. The active site is located in the light chain. In terms of processing, cleaved by autocatalysis into a large and a small subunit. Glycosylated. As to expression, very low level of expression. Detected in spleen lymphocytes, medullary and paracortical thymic lymphocytes, lung interstitial cells, bronchial epithelium, proximal tubules in kidney, crypt cells in small intestine, neurons in brain stem and cerebral cortex and in Purkinje cells. In terms of tissue distribution, very low expression.

The protein localises to the membrane. It catalyses the reaction glutathione + H2O = L-cysteinylglycine + L-glutamate. It carries out the reaction an S-substituted glutathione + H2O = an S-substituted L-cysteinylglycine + L-glutamate. The enzyme catalyses leukotriene C4 + H2O = leukotriene D4 + L-glutamate. The catalysed reaction is S-[(2E,6E,10E)-geranylgeranyl]-L-glutathione + H2O = S-[(2E,6E,10E)-geranylgeranyl]-L-cysteinylglycine + L-glutamate. It catalyses the reaction an N-terminal (5-L-glutamyl)-[peptide] + an alpha-amino acid = 5-L-glutamyl amino acid + an N-terminal L-alpha-aminoacyl-[peptide]. It participates in lipid metabolism; leukotriene D4 biosynthesis. The protein operates within sulfur metabolism; glutathione metabolism. Its activity is regulated as follows. Inhibited by serine-borate. In terms of biological role, cleaves the gamma-glutamyl bond of extracellular glutathione tripeptide (gamma-Glu-Cys-Gly) and certain glutathione conjugates. Hydrolyzes glutathione releasing L-Glu and Cys-Gly dipeptide which is further metabolized to maintain extracellular cysteine levels but also to provide cysteine necessary for intracellular glutathione synthesis. Among glutathione-S-conjugates metabolizes leukotriene C4 (LTC4) and S-geranylgeranyl-glutathione (GGG), but is inactive toward gamma-glutamyl leucine. Converts extracellular LTC4 to LTD4 during acute inflammatory response. Acts as a negative regulator of GGG bioactivity. GGT5 (via GGG catabolism) and ABCC1 (via extracellular transport) establish GGG gradients within lymphoid tissues to position P2RY8-positive lymphocytes at germinal centers in lymphoid follicles and restrict their chemotactic transmigration from blood vessels to bone marrow parenchyma. The transpeptidation reaction, i.e. the transfer of gamma-glutamyl moiety to an acceptor molecule to yield a new gamma-glutamyl compound requires high concentration of dipeptide acceptor and is considered nonphysiological. This Mus musculus (Mouse) protein is Glutathione hydrolase 5 proenzyme (Ggt5).